The sequence spans 312 residues: 2-dehydropantoate 2-reductase (312 aa).

NADP(+) is bound by residues 7-12, N105, and A131; that span reads GAGAMG. N105 is a binding site for substrate. The active-site Proton donor is K187. N191, N195, and S260 together coordinate substrate. E273 contacts NADP(+).

This sequence belongs to the ketopantoate reductase family.

It is found in the cytoplasm. It carries out the reaction (R)-pantoate + NADP(+) = 2-dehydropantoate + NADPH + H(+). It participates in cofactor biosynthesis; (R)-pantothenate biosynthesis; (R)-pantoate from 3-methyl-2-oxobutanoate: step 2/2. Functionally, catalyzes the NADPH-dependent reduction of ketopantoate into pantoic acid. This chain is 2-dehydropantoate 2-reductase, found in Lactococcus lactis subsp. lactis (strain IL1403) (Streptococcus lactis).